Consider the following 226-residue polypeptide: 2,3-bisphosphoglycerate-dependent phosphoglycerate mutase (226 aa).

Substrate-binding positions include 8-15, 21-22, arginine 58, 109-112, lysine 120, 136-137, and 180-181; these read RHGQSVWN, TG, ERMY, RR, and GN. Histidine 9 serves as the catalytic Tele-phosphohistidine intermediate. Catalysis depends on glutamate 109, which acts as the Proton donor/acceptor.

This sequence belongs to the phosphoglycerate mutase family. BPG-dependent PGAM subfamily.

It carries out the reaction (2R)-2-phosphoglycerate = (2R)-3-phosphoglycerate. The protein operates within carbohydrate degradation; glycolysis; pyruvate from D-glyceraldehyde 3-phosphate: step 3/5. Its function is as follows. Catalyzes the interconversion of 2-phosphoglycerate and 3-phosphoglycerate. The chain is 2,3-bisphosphoglycerate-dependent phosphoglycerate mutase from Chlamydia trachomatis serovar L2b (strain UCH-1/proctitis).